Reading from the N-terminus, the 181-residue chain is GTP cyclohydrolase 1 2 (181 aa).

This sequence belongs to the GTP cyclohydrolase I family. Homomer.

The catalysed reaction is GTP + H2O = 7,8-dihydroneopterin 3'-triphosphate + formate + H(+). It functions in the pathway cofactor biosynthesis; 7,8-dihydroneopterin triphosphate biosynthesis; 7,8-dihydroneopterin triphosphate from GTP: step 1/1. This is GTP cyclohydrolase 1 2 (folE2) from Pseudomonas aeruginosa (strain ATCC 15692 / DSM 22644 / CIP 104116 / JCM 14847 / LMG 12228 / 1C / PRS 101 / PAO1).